The sequence spans 226 residues: UPF0173 metal-dependent hydrolase CTN_1413 (226 aa).

The protein belongs to the UPF0173 family.

The protein is UPF0173 metal-dependent hydrolase CTN_1413 of Thermotoga neapolitana (strain ATCC 49049 / DSM 4359 / NBRC 107923 / NS-E).